Reading from the N-terminus, the 193-residue chain is uncharacterized protein (193 aa).

3 helical membrane-spanning segments follow: residues 5-25, 63-83, and 90-110; these read LILL…FIIF, IFIL…LINI, and ILTF…LTPA.

Its subcellular location is the cell membrane. This is an uncharacterized protein from Methanocaldococcus jannaschii (strain ATCC 43067 / DSM 2661 / JAL-1 / JCM 10045 / NBRC 100440) (Methanococcus jannaschii).